Consider the following 182-residue polypeptide: Ribosome maturation factor RimM (182 aa).

One can recognise a PRC barrel domain in the interval 102–182; sequence EEGDYYWKDL…SIEVDWDPGF (81 aa).

It belongs to the RimM family. As to quaternary structure, binds ribosomal protein uS19.

The protein localises to the cytoplasm. Its function is as follows. An accessory protein needed during the final step in the assembly of 30S ribosomal subunit, possibly for assembly of the head region. Essential for efficient processing of 16S rRNA. May be needed both before and after RbfA during the maturation of 16S rRNA. It has affinity for free ribosomal 30S subunits but not for 70S ribosomes. The protein is Ribosome maturation factor RimM of Escherichia fergusonii (strain ATCC 35469 / DSM 13698 / CCUG 18766 / IAM 14443 / JCM 21226 / LMG 7866 / NBRC 102419 / NCTC 12128 / CDC 0568-73).